A 319-amino-acid polypeptide reads, in one-letter code: Type II methyltransferase M.RsrI (319 aa).

Positions 1 to 10 (MANRSHHNAG) are enriched in basic residues. Residues 1 to 32 (MANRSHHNAGHRAMNALRKSGQKHSSESQLGS) form a disordered region.

It belongs to the N(4)/N(6)-methyltransferase family.

It catalyses the reaction a 2'-deoxyadenosine in DNA + S-adenosyl-L-methionine = an N(6)-methyl-2'-deoxyadenosine in DNA + S-adenosyl-L-homocysteine + H(+). Strongly inhibited by N-ethylmaleimide, inactivated by MgCl(2) or MgSO(4). Its function is as follows. A beta subtype methylase, recognizes the double-stranded sequence 5'-GAATTC-3', methylates A-3 on both strands, and protects the DNA from cleavage by the RsrI endonuclease. In Cereibacter sphaeroides (Rhodobacter sphaeroides), this protein is Type II methyltransferase M.RsrI.